The following is a 491-amino-acid chain: Cholesterol 22-monohydroxylase CYP90B51 (491 aa).

Residues 6-26 (ITFYCLSSILSVLLIFIFILI) traverse the membrane as a helical segment. Cys-437 serves as a coordination point for heme.

The protein belongs to the cytochrome P450 family. As to expression, mainly expressed in leaves and seed pods and, to a lower extent, in flowers and stems.

It localises to the membrane. It carries out the reaction cholesterol + reduced [NADPH--hemoprotein reductase] + O2 = (22S)-22-hydroxycholesterol + oxidized [NADPH--hemoprotein reductase] + H2O + H(+). Its pathway is steroid metabolism; cholesterol metabolism. In terms of biological role, canonical brassinosteroid (BR)-biosynthetic enzyme capable of converting cholesterol to 22S-hydroxycholesterol via sterol-C22 hydroxylation. The protein is Cholesterol 22-monohydroxylase CYP90B51 of Trigonella foenum-graecum (Fenugreek).